Here is a 115-residue protein sequence, read N- to C-terminus: MRLNHKQGTAGEDAALAFLQSQGCTLLARNWHCAYGEIDLIVKNGGMILFVEVKYRKNQRFGGAAYSISPSKLLKLQRSVEYYLQQNRLTNVPCRLDAVLIEGNRPPEWIKNITG.

This sequence belongs to the UPF0102 family.

The chain is UPF0102 protein NGO_1987 from Neisseria gonorrhoeae (strain ATCC 700825 / FA 1090).